We begin with the raw amino-acid sequence, 315 residues long: 4-hydroxy-3-methylbut-2-enyl diphosphate reductase (315 aa).

C12 provides a ligand contact to [4Fe-4S] cluster. Residues H41 and H74 each coordinate (2E)-4-hydroxy-3-methylbut-2-enyl diphosphate. Dimethylallyl diphosphate contacts are provided by H41 and H74. Isopentenyl diphosphate contacts are provided by H41 and H74. Position 96 (C96) interacts with [4Fe-4S] cluster. H124 is a (2E)-4-hydroxy-3-methylbut-2-enyl diphosphate binding site. Dimethylallyl diphosphate is bound at residue H124. H124 contributes to the isopentenyl diphosphate binding site. Catalysis depends on E126, which acts as the Proton donor. T168 is a (2E)-4-hydroxy-3-methylbut-2-enyl diphosphate binding site. C198 lines the [4Fe-4S] cluster pocket. Residues S226, S227, N228, and S270 each contribute to the (2E)-4-hydroxy-3-methylbut-2-enyl diphosphate site. Dimethylallyl diphosphate is bound by residues S226, S227, N228, and S270. Isopentenyl diphosphate-binding residues include S226, S227, N228, and S270.

This sequence belongs to the IspH family. [4Fe-4S] cluster is required as a cofactor.

It catalyses the reaction isopentenyl diphosphate + 2 oxidized [2Fe-2S]-[ferredoxin] + H2O = (2E)-4-hydroxy-3-methylbut-2-enyl diphosphate + 2 reduced [2Fe-2S]-[ferredoxin] + 2 H(+). The enzyme catalyses dimethylallyl diphosphate + 2 oxidized [2Fe-2S]-[ferredoxin] + H2O = (2E)-4-hydroxy-3-methylbut-2-enyl diphosphate + 2 reduced [2Fe-2S]-[ferredoxin] + 2 H(+). Its pathway is isoprenoid biosynthesis; dimethylallyl diphosphate biosynthesis; dimethylallyl diphosphate from (2E)-4-hydroxy-3-methylbutenyl diphosphate: step 1/1. The protein operates within isoprenoid biosynthesis; isopentenyl diphosphate biosynthesis via DXP pathway; isopentenyl diphosphate from 1-deoxy-D-xylulose 5-phosphate: step 6/6. Catalyzes the conversion of 1-hydroxy-2-methyl-2-(E)-butenyl 4-diphosphate (HMBPP) into a mixture of isopentenyl diphosphate (IPP) and dimethylallyl diphosphate (DMAPP). Acts in the terminal step of the DOXP/MEP pathway for isoprenoid precursor biosynthesis. The polypeptide is 4-hydroxy-3-methylbut-2-enyl diphosphate reductase (Pseudomonas putida (strain ATCC 700007 / DSM 6899 / JCM 31910 / BCRC 17059 / LMG 24140 / F1)).